The primary structure comprises 483 residues: UDP-N-acetylmuramoyl-L-alanyl-D-glutamate--2,6-diaminopimelate ligase (483 aa).

Ser-30 is a UDP-N-acetyl-alpha-D-muramoyl-L-alanyl-D-glutamate binding site. 109–115 (GTNGKTT) lines the ATP pocket. UDP-N-acetyl-alpha-D-muramoyl-L-alanyl-D-glutamate-binding positions include 151-152 (TT), Ser-178, and Arg-186. Lys-218 is subject to N6-carboxylysine. Meso-2,6-diaminopimelate is bound by residues Arg-380, 403 to 406 (DNPR), Gly-453, and Glu-457. The Meso-diaminopimelate recognition motif motif lies at 403–406 (DNPR).

It belongs to the MurCDEF family. MurE subfamily. Mg(2+) serves as cofactor. Carboxylation is probably crucial for Mg(2+) binding and, consequently, for the gamma-phosphate positioning of ATP.

The protein resides in the cytoplasm. The catalysed reaction is UDP-N-acetyl-alpha-D-muramoyl-L-alanyl-D-glutamate + meso-2,6-diaminopimelate + ATP = UDP-N-acetyl-alpha-D-muramoyl-L-alanyl-gamma-D-glutamyl-meso-2,6-diaminopimelate + ADP + phosphate + H(+). It functions in the pathway cell wall biogenesis; peptidoglycan biosynthesis. In terms of biological role, catalyzes the addition of meso-diaminopimelic acid to the nucleotide precursor UDP-N-acetylmuramoyl-L-alanyl-D-glutamate (UMAG) in the biosynthesis of bacterial cell-wall peptidoglycan. The protein is UDP-N-acetylmuramoyl-L-alanyl-D-glutamate--2,6-diaminopimelate ligase of Chlamydia trachomatis serovar A (strain ATCC VR-571B / DSM 19440 / HAR-13).